The sequence spans 901 residues: Protein translocase subunit SecA (901 aa).

Residues glutamine 87, glycine 105–threonine 109, and aspartate 512 each bind ATP. Residues alanine 852–serine 901 are disordered. Positions 885, 887, 896, and 897 each coordinate Zn(2+). Residues lysine 891 to serine 901 are compositionally biased toward basic residues.

Belongs to the SecA family. Monomer and homodimer. Part of the essential Sec protein translocation apparatus which comprises SecA, SecYEG and auxiliary proteins SecDF-YajC and YidC. It depends on Zn(2+) as a cofactor.

It localises to the cell inner membrane. It is found in the cytoplasm. The catalysed reaction is ATP + H2O + cellular proteinSide 1 = ADP + phosphate + cellular proteinSide 2.. Part of the Sec protein translocase complex. Interacts with the SecYEG preprotein conducting channel. Has a central role in coupling the hydrolysis of ATP to the transfer of proteins into and across the cell membrane, serving both as a receptor for the preprotein-SecB complex and as an ATP-driven molecular motor driving the stepwise translocation of polypeptide chains across the membrane. In Klebsiella pneumoniae subsp. pneumoniae (strain ATCC 700721 / MGH 78578), this protein is Protein translocase subunit SecA.